The chain runs to 336 residues: MSLDIDQIALHQLVKRDEQTLDVVLRDSLLPTNAAVEEMMEELHRVYSAKSKAYGLFNEGSELADALRTCRKEDKDFLAFSRAATGRLRDELAKYPFAEGGVVLFGQYRYLAVEYLLIAVLNSRNSSRVNEELDINTTHYLDINHADIVARIDLTEWETNPESTRYLTFLKGRVGRKVSDFFMDFLAAAEGLDTKAQNRGLLQAVDDYCADAQLDKNERQSVRQQVYSYCNEQLQAGEEIELQELSKEIAPVGEKDFLQFSSEQGYQLEDSFPADRGTLRQLTKFAGSGGGISMNFDAMLLGERIFWDAATDTLTIRGTPPNLRDQLQRRQNSGNK.

The protein belongs to the YejK family.

It is found in the cytoplasm. The protein resides in the nucleoid. This Serratia proteamaculans (strain 568) protein is Nucleoid-associated protein Spro_3255.